The chain runs to 82 residues: Small ribosomal subunit protein bS16 (82 aa).

It belongs to the bacterial ribosomal protein bS16 family.

In Aeromonas salmonicida (strain A449), this protein is Small ribosomal subunit protein bS16.